The sequence spans 253 residues: Ribonuclease HII (253 aa).

The 184-residue stretch at 70–253 folds into the RNase H type-2 domain; sequence NLIAGIDEVG…KSFEPIKSML (184 aa). Residues D76, E77, and D168 each coordinate a divalent metal cation.

It belongs to the RNase HII family. The cofactor is Mn(2+). Mg(2+) is required as a cofactor.

The protein localises to the cytoplasm. It catalyses the reaction Endonucleolytic cleavage to 5'-phosphomonoester.. Functionally, endonuclease that specifically degrades the RNA of RNA-DNA hybrids. The chain is Ribonuclease HII from Streptococcus agalactiae serotype Ia (strain ATCC 27591 / A909 / CDC SS700).